Consider the following 312-residue polypeptide: Very-long-chain 3-oxoacyl-CoA reductase-like protein At1g24470 (312 aa).

Residues 14–34 traverse the membrane as a helical segment; it reads LHFVCFIGFLFLLRVLFIPLL. 52–81 serves as a coordination point for NADP(+); sequence GSWAMVTGATEGIGRAFAHELAKHGLNLIL. S190 contacts substrate. Y205 (proton acceptor) is an active-site residue.

Belongs to the short-chain dehydrogenases/reductases (SDR) family. In terms of tissue distribution, expressed in green siliques, flowers, inflorescence stems and leaves. Not detected in roots.

It localises to the endoplasmic reticulum membrane. Probable reductase, but unlike KCR1, has no beta-ketoacyl-coenzyme A reductase activity. The sequence is that of Very-long-chain 3-oxoacyl-CoA reductase-like protein At1g24470 (KCR2) from Arabidopsis thaliana (Mouse-ear cress).